The chain runs to 359 residues: Mannose-1-phosphate guanylyltransferase (359 aa).

Belongs to the transferase hexapeptide repeat family.

It catalyses the reaction alpha-D-mannose 1-phosphate + GTP + H(+) = GDP-alpha-D-mannose + diphosphate. It participates in cell wall biogenesis. It functions in the pathway nucleotide-sugar biosynthesis; GDP-alpha-D-mannose biosynthesis; GDP-alpha-D-mannose from alpha-D-mannose 1-phosphate (GTP route): step 1/1. Its function is as follows. Catalyzes the formation of GDP-mannose from D-mannose-1-phosphate and GTP. Plays an important role in the synthesis of different glycoconjugates which are responsible for cell wall structure, virulence and immunomodulatory activity of M.tuberculosis. The chain is Mannose-1-phosphate guanylyltransferase from Mycobacterium tuberculosis (strain ATCC 25618 / H37Rv).